The chain runs to 352 residues: Galactokinase (352 aa).

Residue 17-20 coordinates substrate; the sequence is EHTD. Residues serine 49 and 101 to 107 contribute to the ATP site; that span reads GAGLSSS. 2 residues coordinate Mg(2+): serine 107 and glutamate 139. The active-site Proton acceptor is the aspartate 151. Tyrosine 200 lines the substrate pocket.

The protein belongs to the GHMP kinase family. GalK subfamily. In terms of assembly, monomer.

The protein localises to the cytoplasm. The enzyme catalyses alpha-D-galactose + ATP = alpha-D-galactose 1-phosphate + ADP + H(+). It participates in carbohydrate metabolism; galactose metabolism. Catalyzes the transfer of the gamma-phosphate of ATP to D-galactose to form alpha-D-galactose-1-phosphate (Gal-1-P). Is very specific for its substrate, since it is not able to use D-glucose, D-fructose, D-mannose, 2-deoxy-D-glucose, and D-glucosamine as substrates. The polypeptide is Galactokinase (Pyrococcus furiosus (strain ATCC 43587 / DSM 3638 / JCM 8422 / Vc1)).